The primary structure comprises 187 residues: Corticoliberin (187 aa).

A signal peptide spans 1–19 (MRLRLLVSAGMLLVALSSC). Residues 20 to 144 (LPCRALLSRG…HQGALERERR (125 aa)) constitute a propeptide that is removed on maturation. 2 disordered regions span residues 75 to 94 (AARL…SRPS) and 114 to 146 (QRSL…RRSE). Over residues 117–129 (LDSRAEPAERGAE) the composition is skewed to basic and acidic residues. At isoleucine 185 the chain carries Isoleucine amide.

The protein belongs to the sauvagine/corticotropin-releasing factor/urotensin I family. Interacts (via C-terminus) with CRFR1 (via N-terminal extracellular domain). As to expression, expressed in parvocellular paraventricular nucleus of the hypothalamus and in medial accessory olivary nucleus.

It localises to the secreted. Its function is as follows. Hormone regulating the release of corticotropin from pituitary gland. Induces NLRP6 in intestinal epithelial cells, hence may influence gut microbiota profile. In Mus musculus (Mouse), this protein is Corticoliberin (Crh).